The following is a 307-amino-acid chain: N-acetylmuramic acid 6-phosphate etherase (307 aa).

Residues 62–225 form the SIS domain; that stretch reads IVSSFNRGGR…STASMIRIGK (164 aa). The Proton donor role is filled by glutamate 90. The active site involves glutamate 121.

This sequence belongs to the GCKR-like family. MurNAc-6-P etherase subfamily. Homodimer.

The catalysed reaction is N-acetyl-D-muramate 6-phosphate + H2O = N-acetyl-D-glucosamine 6-phosphate + (R)-lactate. The protein operates within amino-sugar metabolism; 1,6-anhydro-N-acetylmuramate degradation. It participates in amino-sugar metabolism; N-acetylmuramate degradation. Its pathway is cell wall biogenesis; peptidoglycan recycling. In terms of biological role, specifically catalyzes the cleavage of the D-lactyl ether substituent of MurNAc 6-phosphate, producing GlcNAc 6-phosphate and D-lactate. Together with AnmK, is also required for the utilization of anhydro-N-acetylmuramic acid (anhMurNAc) either imported from the medium or derived from its own cell wall murein, and thus plays a role in cell wall recycling. In Pseudoalteromonas atlantica (strain T6c / ATCC BAA-1087), this protein is N-acetylmuramic acid 6-phosphate etherase.